A 64-amino-acid chain; its full sequence is MKPSGLTFAFLVVFMMAIMYNSVQVTADADADAEAEALANALAEAGILDWGKKVMDWIKDKMGK.

Positions 1–27 (MKPSGLTFAFLVVFMMAIMYNSVQVTA) are cleaved as a signal peptide. Positions 28–45 (DADADAEAEALANALAEA) are excised as a propeptide. Methionine 62 is modified (methionine amide).

In terms of processing, truncated sequences of this peptide have also been found in the venom. It is possible they have been cleaved in the venom. Expressed by the venom gland.

The protein resides in the secreted. Functionally, antimicrobial peptide with activities against E.coli (MIC=1.3 uM), S.aureus (MIC=3.1 uM), and S.cerevisiae (MIC=50 uM). Also shows histamine-releasing activity (32.9% at 10 uM). Does not show hemolytic activity, even at 50 uM. It is a short peptide for which no alpha-helical region has been predicted. This chain is U-poneritoxin(01)-Om1a, found in Odontomachus monticola (Trap-jaw ant).